The following is a 634-amino-acid chain: MWLQQRLKGLPGLLSSSWARRLLCLLGLLVLLLWFAGSGARRAAGGLQLLPWPHGEPGAAEPSACLEAATHAWRSLRERGEAVLLGPGVPSLVANGFLALDVVANRLWVTPGEREPAVAPDFVPFVQLRPLSALPEAGESVLLLREGLLRRVRCLQLGTSGPGPAAAGPGPASASGLLTGSGRDCVLLQEDFLAHRGRPHVYLQRIQLNNPTERVAALQTVGPTAGPAPRAFTSTLEKVGDHQFLLYSGRSPPVPTGLVHLVVVAAKKLVDRLQVAPRTQLDETVLWVVHVSGPLNPQVLKSKAAKELKVLQDLARKEMLELLEMPAAELLQDHQRLWAQLFSPGVEMKKITDAHTPSGLTVNLTLYYMLSCSPAPLLSPDLSHRERDQMESTLNYEDHCFSGHATMHAENLWPGRLSSVQQILQLWDLWRLTLQKRGCKGLVRAGAPGILQGMVLSFGGLQFTENHLQFQADPDVLHNSYALHGIRYKNDHINLAVLADAEGKPYLHVSVESRGQLVKIYACEAGCLDEPVELTSAPQGHTFSVMVTQPITPLLYISTDLTHLQDLRHTLHLKAILAHDEHMAQQDPGLPFLFWFSVASLITLFHLFLFKLIYNEYCGPGAKPFFRNKEDPSV.

Positions 1 to 40 (MWLQQRLKGLPGLLSSSWARRLLCLLGLLVLLLWFAGSGA) are cleaved as a signal peptide. At 41-589 (RRAAGGLQLL…DEHMAQQDPG (549 aa)) the chain is on the extracellular side. The N-linked (GlcNAc...) asparagine glycan is linked to N363. The chain crosses the membrane as a helical span at residues 590 to 610 (LPFLFWFSVASLITLFHLFLF). Residues 611–634 (KLIYNEYCGPGAKPFFRNKEDPSV) are Cytoplasmic-facing.

Its subcellular location is the membrane. This is an uncharacterized protein from Bos taurus (Bovine).